The chain runs to 357 residues: Protein-glutamate methylesterase/protein-glutamine glutaminase (357 aa).

The 118-residue stretch at 3–120 folds into the Response regulatory domain; it reads RVLVVDDSAF…SIDLYKVRDM (118 aa). Position 54 is a 4-aspartylphosphate (aspartate 54). The CheB-type methylesterase domain occupies 161-355; the sequence is FRAGKQLICI…AAIMTYMKKE (195 aa). Active-site residues include serine 173, histidine 200, and aspartate 296.

The protein belongs to the CheB family. Phosphorylated by CheA. Phosphorylation of the N-terminal regulatory domain activates the methylesterase activity.

It localises to the cytoplasm. The catalysed reaction is [protein]-L-glutamate 5-O-methyl ester + H2O = L-glutamyl-[protein] + methanol + H(+). It carries out the reaction L-glutaminyl-[protein] + H2O = L-glutamyl-[protein] + NH4(+). Its function is as follows. Involved in chemotaxis. Part of a chemotaxis signal transduction system that modulates chemotaxis in response to various stimuli. Catalyzes the demethylation of specific methylglutamate residues introduced into the chemoreceptors (methyl-accepting chemotaxis proteins or MCP) by CheR. Also mediates the irreversible deamidation of specific glutamine residues to glutamic acid. This chain is Protein-glutamate methylesterase/protein-glutamine glutaminase, found in Bacillus licheniformis (strain ATCC 14580 / DSM 13 / JCM 2505 / CCUG 7422 / NBRC 12200 / NCIMB 9375 / NCTC 10341 / NRRL NRS-1264 / Gibson 46).